Consider the following 348-residue polypeptide: NADH-ubiquinone oxidoreductase chain 2 (348 aa).

Transmembrane regions (helical) follow at residues 13-33, 60-80, 96-116, 124-144, 150-170, 200-220, 241-261, 278-298, and 325-345; these read VITGTLITMLSSHWFLAWAGL, FLAQSTASMILMMAIISNNLL, PLAMTIALTMKLGMAPFHFWV, PLTSGLLLLTWQKLAPISIMY, INTHILLILSTLSIAVGSWGG, TITTLYLITYITLTTTMFLTL, LMPLMTSTLLSLGGLPPLTGF, IIPTIMITMTLLNLYFYMRLI, and LFIPALITISTLLLPISPLIL.

Belongs to the complex I subunit 2 family. Core subunit of respiratory chain NADH dehydrogenase (Complex I) which is composed of 45 different subunits. Interacts with TMEM242.

It is found in the mitochondrion inner membrane. It carries out the reaction a ubiquinone + NADH + 5 H(+)(in) = a ubiquinol + NAD(+) + 4 H(+)(out). Core subunit of the mitochondrial membrane respiratory chain NADH dehydrogenase (Complex I) which catalyzes electron transfer from NADH through the respiratory chain, using ubiquinone as an electron acceptor. Essential for the catalytic activity and assembly of complex I. The polypeptide is NADH-ubiquinone oxidoreductase chain 2 (Papio hamadryas (Hamadryas baboon)).